The chain runs to 140 residues: ATP synthase epsilon chain (140 aa).

The protein belongs to the ATPase epsilon chain family. F-type ATPases have 2 components, CF(1) - the catalytic core - and CF(0) - the membrane proton channel. CF(1) has five subunits: alpha(3), beta(3), gamma(1), delta(1), epsilon(1). CF(0) has three main subunits: a, b and c.

It is found in the cell inner membrane. Its function is as follows. Produces ATP from ADP in the presence of a proton gradient across the membrane. The polypeptide is ATP synthase epsilon chain (atpC) (Vibrio alginolyticus).